Consider the following 476-residue polypeptide: CDK5 and ABL1 enzyme substrate 2 (476 aa).

A disordered region spans residues 1 to 119 (MAAAAAGGAP…GLGLDGQRQR (119 aa)). Residues 30-40 (PRRRGDSRRRQ) are compositionally biased toward basic residues. A compositionally biased stretch (pro residues) spans 65-96 (PAPPPPPPTEAREAPAPPPAPPGGLPGLPARP). Phosphoserine occurs at positions 128 and 206. The disordered stretch occupies residues 256–295 (DSHGLLPQPRPSIPRAPPGSRHKPVPTKSTPAGTELGSDG). The span at 263–272 (QPRPSIPRAP) shows a compositional bias: pro residues.

This sequence belongs to the cyclin family. Binds to CDK3, CDK5 and ABL1. The C-terminal cyclin-box-like region binds to CDK5. As to expression, widely expressed.

Unknown. Probably involved in G1-S cell cycle transition. This Mus musculus (Mouse) protein is CDK5 and ABL1 enzyme substrate 2 (Cables2).